Reading from the N-terminus, the 155-residue chain is Small ribosomal subunit protein uS7 (155 aa).

It belongs to the universal ribosomal protein uS7 family. As to quaternary structure, part of the 30S ribosomal subunit. Contacts proteins S9 and S11.

Functionally, one of the primary rRNA binding proteins, it binds directly to 16S rRNA where it nucleates assembly of the head domain of the 30S subunit. Is located at the subunit interface close to the decoding center, probably blocks exit of the E-site tRNA. The polypeptide is Small ribosomal subunit protein uS7 (Corynebacterium efficiens (strain DSM 44549 / YS-314 / AJ 12310 / JCM 11189 / NBRC 100395)).